The primary structure comprises 459 residues: MVNIYNTLTRQKEQFKPMVEGKIDMYVCGITIYDYCHIGHARTFVGFDVIVRYLRHIGYDLKYVRNITDVDDKIIKRANENGESINDLTVRMTKAMHEDFDSLNMLRPDVEPTVTAHMDEIIEMVERLITKGHAYVAADGDVLFDVSTFEQYGALSQQDLTMLQSGSRVEVAQDKDDPLDFVLWKKAKAGEPSWSSPWGEGRPGWHIECSAMSSKHLGEHFDIHGGGSDLQFPHHENEIAQSCCANNGKYVNTWIHTGMVQVNKEKMSKSLDNFFTVREVLKQYDAESVRYFLISGHYRSQLNYSQENLDQARSSLERIYTALRGVEPVACELDDNEYVIKFRKAMDDDFNTPEALPVLFELAKELNLVKDIDSQQAGQLAFILGSISEVLGVAQQDPEAFLQGGQDDDEVAQIEALIVKRNDARASKNWAAADEARDALSALGVILEDSAGKTTWRKA.

Residue cysteine 28 participates in Zn(2+) binding. Residues 30–40 (ITIYDYCHIGH) carry the 'HIGH' region motif. Zn(2+) is bound by residues cysteine 209, histidine 234, and glutamate 238. The 'KMSKS' region signature appears at 266–270 (KMSKS). Lysine 269 is a binding site for ATP.

It belongs to the class-I aminoacyl-tRNA synthetase family. Monomer. Requires Zn(2+) as cofactor.

The protein localises to the cytoplasm. It carries out the reaction tRNA(Cys) + L-cysteine + ATP = L-cysteinyl-tRNA(Cys) + AMP + diphosphate. This chain is Cysteine--tRNA ligase, found in Pseudoalteromonas translucida (strain TAC 125).